The chain runs to 96 residues: Small ribosomal subunit protein bS18 (96 aa).

The span at 1–22 (MYKDIDSHQRDSRTDGHQDGFK) shows a compositional bias: basic and acidic residues. The disordered stretch occupies residues 1–25 (MYKDIDSHQRDSRTDGHQDGFKKNP).

This sequence belongs to the bacterial ribosomal protein bS18 family. Part of the 30S ribosomal subunit. Forms a tight heterodimer with protein bS6.

Binds as a heterodimer with protein bS6 to the central domain of the 16S rRNA, where it helps stabilize the platform of the 30S subunit. This chain is Small ribosomal subunit protein bS18, found in Borrelia duttonii (strain Ly).